A 152-amino-acid polypeptide reads, in one-letter code: Deoxyuridine 5'-triphosphate nucleotidohydrolase (152 aa).

Residues 71–73 (RSG), N84, 88–90 (LID), and M98 contribute to the substrate site.

This sequence belongs to the dUTPase family. Mg(2+) is required as a cofactor.

It carries out the reaction dUTP + H2O = dUMP + diphosphate + H(+). It participates in pyrimidine metabolism; dUMP biosynthesis; dUMP from dCTP (dUTP route): step 2/2. This enzyme is involved in nucleotide metabolism: it produces dUMP, the immediate precursor of thymidine nucleotides and it decreases the intracellular concentration of dUTP so that uracil cannot be incorporated into DNA. The chain is Deoxyuridine 5'-triphosphate nucleotidohydrolase from Shewanella baltica (strain OS155 / ATCC BAA-1091).